Here is a 513-residue protein sequence, read N- to C-terminus: Probable G-protein coupled receptor Mth-like 9 (513 aa).

Residues 1 to 19 (MVSPLIILLIIWLSVGAKS) form the signal peptide. The Extracellular segment spans residues 20–207 (VEIASINHPC…NCERFQTGYR (188 aa)). Intrachain disulfides connect Cys29/Cys82, Cys84/Cys89, Cys93/Cys181, and Cys94/Cys107. Asn36 is a glycosylation site (N-linked (GlcNAc...) asparagine). Asn106, Asn125, and Asn165 each carry an N-linked (GlcNAc...) asparagine glycan. Residues 208-228 (VWIYAICSIIAIIINIFILSL) form a helical membrane-spanning segment. At 229–242 (LGSVRDARKSHYGQ) the chain is on the cytoplasmic side. Residues 243–263 (LIIYYLLSMIVGYSLLVYLAL) form a helical membrane-spanning segment. Topologically, residues 264 to 276 (KNPMKLSHVACRN) are extracellular. Residues 277-297 (IGFLAYFCIMLSFVFLAICSL) form a helical membrane-spanning segment. The Cytoplasmic portion of the chain corresponds to 298–314 (DFLLKFKQKAVRSSVRR). The chain crosses the membrane as a helical span at residues 315–335 (LSLALAVLAVIGLRFLVSLAQ). Residues 336 to 360 (DSKLPKHFKPGMGEDYCWFDVRTWG) are Extracellular-facing. Residues 361–381 (ILIYYYGPIALLLIFSIVCCL) form a helical membrane-spanning segment. At 382–403 (KAYFSIYELPPDTQYILGTQLK) the chain is on the cytoplasmic side. Residues 404–424 (IVKTHFYAFSAYIVGVFAVWI) form a helical membrane-spanning segment. The Extracellular portion of the chain corresponds to 425-438 (REIVVYIMARVREH). A helical membrane pass occupies residues 439 to 459 (FFIIDFWSGICILGLAIAGFI). The Cytoplasmic segment spans residues 460–513 (LLLGKNLHVKSWWAINVESSQTDLSIINARVYKFDEKGDLKSSDSPYKPTVTSL).

Belongs to the G-protein coupled receptor 2 family. Mth subfamily.

The protein localises to the cell membrane. This is Probable G-protein coupled receptor Mth-like 9 (mthl9) from Drosophila melanogaster (Fruit fly).